We begin with the raw amino-acid sequence, 206 residues long: MGKKIDNPESSAKVSDAEEEEEEYAVEKIIDRRVRKGKVEYYLKWKGYPETENTWEPENNLDCQDLIQQYEASRKDEEKSAASKKDRPSSSAKAKETQGRASSSTSTASKRKSEEPTAPSGNKSKRTTDAEQDTIPVSGSTGFDRGLEAEKILGASDNNGRLTFLIQFKGVDQAEMVPSSVANEKIPRMVIHFYEERLSWYSDNED.

2 disordered regions span residues 1-24 (MGKKIDNPESSAKVSDAEEEEEEY) and 47-145 (GYPE…GFDR). A phosphoserine mark is found at S11 and S15. Positions 24–82 (YAVEKIIDRRVRKGKVEYYLKWKGYPETENTWEPENNLDCQDLIQQYEASRKDEEKSAA) constitute a Chromo 1 domain. Positions 50–60 (ETENTWEPENN) are enriched in low complexity. Residues 72–98 (ASRKDEEKSAASKKDRPSSSAKAKETQ) are compositionally biased toward basic and acidic residues. The segment at 95-206 (KETQGRASSS…RLSWYSDNED (112 aa)) is binds to Su(var)39. 3 positions are modified to phosphoserine: S102, S103, and S113. 3 positions are modified to phosphothreonine: T127, T128, and T134. The 59-residue stretch at 147 to 205 (LEAEKILGASDNNGRLTFLIQFKGVDQAEMVPSSVANEKIPRMVIHFYEERLSWYSDNE) folds into the Chromo 2 domain.

As to quaternary structure, homodimer. Probably associates with Su(var)3-9. Interacts with Mcm10. Interacts (via chromoshadow domain) with piwi (via N-terminal region). Interacts with Rrp6. Associates with and may be part of the HipHop-HOAP telomere capping complex but is not required for its stability or telomere localization. Interacts (via the chromo domain 2 (chromoshadow domain) and the hinge region between chromo domains 1 and 2) with cav/HOAP (via C-terminus); the interaction is direct. Each molecule of cav/HOAP interacts with 2 molecules of Su(var)205/HP1. Interacts with HipHop (via N-terminus). Interacts with moi/modigliani; the interaction is direct. Interacts (via chromo domain 1) with His3/histone 3 (via N-terminal tail methylated at 'Lys-10'); the interaction is direct. In terms of tissue distribution, salivary gland (at protein level).

It localises to the nucleus. The protein localises to the nucleoplasm. The protein resides in the chromosome. It is found in the telomere. Structural component of heterochromatin, involved in gene repression and the modification of position-effect-variegation. Recognizes and binds histone H3 tails methylated at 'Lys-9', leading to epigenetic repression. Stabilizes chromatin-associated RNAs probably by binding to them and thereby preventing their degradation. Associates with, and may be a part of, the HipHop-HOAP complex that recruits the MTV complex to form the terminin telomere-capping complex, which binds to chromosome ends in a sequence-independent manner and prevents telomere fusion. Telomere capping is independent of the origin recognition complex (ORC). This is Heterochromatin protein 1 from Drosophila melanogaster (Fruit fly).